We begin with the raw amino-acid sequence, 191 residues long: Thymidylate kinase (191 aa).

7–14 contacts ATP; it reads GIDGVGKS.

Belongs to the thymidylate kinase family.

It carries out the reaction dTMP + ATP = dTDP + ADP. Phosphorylation of dTMP to form dTDP in both de novo and salvage pathways of dTTP synthesis. This is Thymidylate kinase from Helicobacter acinonychis (strain Sheeba).